A 210-amino-acid polypeptide reads, in one-letter code: Isochorismatase domain-containing protein 2B (210 aa).

An N6-succinyllysine modification is found at K178.

Belongs to the isochorismatase family. Interacts with CDKN2A. Ubiquitous. Expressed predominantly in uterus, stomach and urinary tract.

The protein localises to the cytoplasm. Its subcellular location is the nucleus. The sequence is that of Isochorismatase domain-containing protein 2B (Isoc2b) from Mus musculus (Mouse).